We begin with the raw amino-acid sequence, 393 residues long: S-adenosylmethionine synthase (393 aa).

Glu-9 provides a ligand contact to Mg(2+). His-15 lines the ATP pocket. Glu-43 serves as a coordination point for K(+). L-methionine is bound by residues Glu-56 and Gln-99. Residues 167–169, 235–238, Asp-246, 252–253, Ala-269, Lys-273, and Lys-277 each bind ATP; these read DGK, SGRF, and RK. Residue Asp-246 participates in L-methionine binding. Position 277 (Lys-277) interacts with L-methionine.

This sequence belongs to the AdoMet synthase family. Homotetramer. Mn(2+) serves as cofactor. It depends on Mg(2+) as a cofactor. Requires Co(2+) as cofactor. K(+) is required as a cofactor.

The protein localises to the cytoplasm. The enzyme catalyses L-methionine + ATP + H2O = S-adenosyl-L-methionine + phosphate + diphosphate. It participates in amino-acid biosynthesis; S-adenosyl-L-methionine biosynthesis; S-adenosyl-L-methionine from L-methionine: step 1/1. Its function is as follows. Catalyzes the formation of S-adenosylmethionine from methionine and ATP. The reaction comprises two steps that are both catalyzed by the same enzyme: formation of S-adenosylmethionine (AdoMet) and triphosphate, and subsequent hydrolysis of the triphosphate. This chain is S-adenosylmethionine synthase (SAMS), found in Gossypium hirsutum (Upland cotton).